A 518-amino-acid polypeptide reads, in one-letter code: GMP synthase [glutamine-hydrolyzing] (518 aa).

The Glutamine amidotransferase type-1 domain maps to 13–203; that stretch reads KIIVLDFGSQ…ALNVCGCKGD (191 aa). Cysteine 90 (nucleophile) is an active-site residue. Catalysis depends on residues histidine 177 and glutamate 179. One can recognise a GMPS ATP-PPase domain in the interval 204–393; sequence WTMENFSEVE…LGMPDAIVWR (190 aa). Residue 231–237 participates in ATP binding; the sequence is SGGVDSS.

Homodimer.

The catalysed reaction is XMP + L-glutamine + ATP + H2O = GMP + L-glutamate + AMP + diphosphate + 2 H(+). Its pathway is purine metabolism; GMP biosynthesis; GMP from XMP (L-Gln route): step 1/1. Catalyzes the synthesis of GMP from XMP. This is GMP synthase [glutamine-hydrolyzing] from Listeria welshimeri serovar 6b (strain ATCC 35897 / DSM 20650 / CCUG 15529 / CIP 8149 / NCTC 11857 / SLCC 5334 / V8).